Consider the following 394-residue polypeptide: Phosphoglycerate kinase (394 aa).

Substrate contacts are provided by residues 21–23, Arg-36, 59–62, Arg-118, and Arg-151; these read DFN and HLGR. A Phosphoserine modification is found at Ser-183. ATP contacts are provided by Lys-201 and Gly-292. Phosphothreonine is present on Thr-299. ATP is bound by residues Glu-323 and 350–353; that span reads GGDS.

This sequence belongs to the phosphoglycerate kinase family. Monomer.

The protein localises to the cytoplasm. It catalyses the reaction (2R)-3-phosphoglycerate + ATP = (2R)-3-phospho-glyceroyl phosphate + ADP. It participates in carbohydrate degradation; glycolysis; pyruvate from D-glyceraldehyde 3-phosphate: step 2/5. The polypeptide is Phosphoglycerate kinase (Bacillus anthracis (strain A0248)).